The primary structure comprises 219 residues: MLTTTASSAAAVARQLTTRRVIAPSFVSQAIRTYATPAGPPPKGFRIPTPKTWDQEEEHVLDKNGRYFLLTEMFRGMYVAMEQFFRPPYTIYYPFEKGPISPRFRGEHALRRYPSGEERCIACKLCEAVCPAQAITIEAEERADGSRRTTRYDIDMTKCIYCGFCQESCPVDAIVESPNAEYATETREELLYNKEKLLSNGDKWEPELAAAIRADSPYR.

4Fe-4S ferredoxin-type domains lie at 111–140 (RRYP…IEAE) and 150–179 (TRYD…ESPN). Residues Cys-120, Cys-123, Cys-126, Cys-130, Cys-159, Cys-162, Cys-165, and Cys-169 each contribute to the [4Fe-4S] cluster site.

Belongs to the complex I 23 kDa subunit family. Complex I is composed of about 40 different subunits. [4Fe-4S] cluster is required as a cofactor.

Its subcellular location is the mitochondrion. It carries out the reaction a ubiquinone + NADH + 5 H(+)(in) = a ubiquinol + NAD(+) + 4 H(+)(out). In terms of biological role, core subunit of the mitochondrial membrane respiratory chain NADH dehydrogenase (Complex I) that is believed to belong to the minimal assembly required for catalysis. Complex I functions in the transfer of electrons from NADH to the respiratory chain. The immediate electron acceptor for the enzyme is believed to be ubiquinone. May donate electrons to ubiquinone. The sequence is that of NADH-ubiquinone oxidoreductase 23 kDa subunit, mitochondrial (nuo21.3c) from Neurospora crassa (strain ATCC 24698 / 74-OR23-1A / CBS 708.71 / DSM 1257 / FGSC 987).